The primary structure comprises 343 residues: Cyclin-Y-like protein 1-B (343 aa).

Residues 1 to 69 (MGNTVTCCVS…ECNPSDHPQA (69 aa)) are disordered. Basic and acidic residues predominate over residues 17-28 (AGRDRRVAERGE). In terms of domain architecture, Cyclin N-terminal spans 145–267 (DIFDEKLHPL…FLELLQFNIN (123 aa)).

Belongs to the cyclin family. Cyclin Y subfamily.

The sequence is that of Cyclin-Y-like protein 1-B (ccnyl1-b) from Xenopus laevis (African clawed frog).